Reading from the N-terminus, the 91-residue chain is Small ribosomal subunit protein bS16 (91 aa).

It belongs to the bacterial ribosomal protein bS16 family.

This is Small ribosomal subunit protein bS16 from Ruthia magnifica subsp. Calyptogena magnifica.